The chain runs to 853 residues: DNA mismatch repair protein MutS (853 aa).

614 to 621 (GPNMGGKS) is a binding site for ATP.

Belongs to the DNA mismatch repair MutS family.

In terms of biological role, this protein is involved in the repair of mismatches in DNA. It is possible that it carries out the mismatch recognition step. This protein has a weak ATPase activity. The chain is DNA mismatch repair protein MutS from Escherichia fergusonii (strain ATCC 35469 / DSM 13698 / CCUG 18766 / IAM 14443 / JCM 21226 / LMG 7866 / NBRC 102419 / NCTC 12128 / CDC 0568-73).